A 117-amino-acid chain; its full sequence is Fluoride-specific ion channel FluC 2 (117 aa).

Helical transmembrane passes span 1 to 21 and 46 to 66; these read MISI…RSAI and FLIG…AFFV. Residues glycine 71 and threonine 74 each contribute to the Na(+) site. A helical membrane pass occupies residues 95-115; that stretch reads LFLNYSLLQFIIGFIACYIGY.

Belongs to the fluoride channel Fluc/FEX (TC 1.A.43) family.

Its subcellular location is the cell membrane. The enzyme catalyses fluoride(in) = fluoride(out). With respect to regulation, na(+) is not transported, but it plays an essential structural role and its presence is essential for fluoride channel function. Fluoride-specific ion channel. Important for reducing fluoride concentration in the cell, thus reducing its toxicity. This Staphylococcus aureus (strain Mu50 / ATCC 700699) protein is Fluoride-specific ion channel FluC 2.